The primary structure comprises 1061 residues: Ribonuclease E (1061 aa).

The region spanning 39-119 (ANIYKGKITR…GNKGAALTTF (81 aa)) is the S1 motif domain. Residues 57-112 (FVDYGAERHGFLPLKEIAREYFPANYSAHGRPNIKDVLREGQEVIVQIDKEERGNK) form an interaction with RNA region. The segment at 169–170 (RT) is interaction with RNA 5'-terminal monophosphate. Mg(2+) contacts are provided by Asp-303 and Asp-346. Residues Cys-404 and Cys-407 each contribute to the Zn(2+) site. The required for zinc-mediated homotetramerization and catalytic activity stretch occupies residues 404–407 (CPRC). 3 disordered regions span residues 532–565 (FAMP…PAAP), 586–731 (EETK…KVRY), and 752–822 (EPIV…RYPT). Positions 536-546 (DVPPAPTPAEP) are enriched in pro residues. The segment covering 547-565 (AAPVVAPAPKAAPATPAAP) has biased composition (low complexity). Composition is skewed to basic and acidic residues over residues 598–608 (AEAKPERQQDR), 615–640 (NRRD…EENR), and 652–690 (ETRE…KRQA). A compositionally biased stretch (basic residues) spans 796-814 (RRSRRSPRHLRVSGQRRRR). The interaction with enolase stretch occupies residues 833 to 850 (ASPELASGKVWIRYPIVR). The tract at residues 1021 to 1061 (EAPRHSDWQRPTFAFEGKGAAGGHTATHHASAAPARPQPVE) is interaction with PNPase. A disordered region spans residues 1031–1061 (PTFAFEGKGAAGGHTATHHASAAPARPQPVE). Low complexity predominate over residues 1043–1055 (GHTATHHASAAPA).

This sequence belongs to the RNase E/G family. RNase E subfamily. In terms of assembly, component of the RNA degradosome, which is a multiprotein complex involved in RNA processing and mRNA degradation. Within the RNA degradosome, RNase E assembles into a homotetramer formed by a dimer of dimers. Tetramerization is essential for catalytic activity, but not for RNA-binding. Interacts with RhlB, PNPase (pnp) and enolase (eno). Interacts with DeaD at reduced temperature. The cofactor is Zn(2+). Mg(2+) serves as cofactor.

It is found in the cytoplasm. Its subcellular location is the cell inner membrane. The enzyme catalyses Endonucleolytic cleavage of single-stranded RNA in A- and U-rich regions.. The presence of a 5'-monophosphate on substrate RNA accelerates its cleavage by catalytically activating the enzyme. Binding to the membrane stabilizes protein structure and increases affinity for the substrate. Endoribonuclease that plays a central role in RNA processing and decay. Required for the maturation of 5S and 16S rRNAs and the majority of tRNAs. Also involved in the degradation of most mRNAs. Can also process other RNA species, such as RNAI, a molecule that controls the replication of ColE1 plasmid, and the cell division inhibitor DicF-RNA. It initiates the decay of RNAs by cutting them internally near their 5'-end. It is able to remove poly(A) tails by an endonucleolytic process. Required to initiate rRNA degradation during both starvation and quality control; acts after RNase PH (rph) exonucleolytically digests the 3'-end of the 16S rRNA. Degradation of 16S rRNA leads to 23S rRNA degradation. Processes the 3 tRNA(Pro) precursors immediately after the 3'-CCA to generate the mature ends. In terms of biological role, prefers 5'-monophosphorylated substrates over 5'-triphosphorylated substrates. 5'-monophosphate-assisted cleavage requires at least 2 and preferably 3 or more unpaired 5'-terminal nucleotides. The optimal spacing between the 5' end and the scissile phosphate appears to be 8 nucleotides. Any sequence of unpaired nucleotides at the 5'-end is tolerated. This Escherichia coli (strain K12) protein is Ribonuclease E.